A 213-amino-acid chain; its full sequence is Histone H1 (213 aa).

Low complexity predominate over residues 1–25 (MAAATASAAATPAKKAAPKKPAAAP). Disordered stretches follow at residues 1 to 30 (MAAA…HPSY) and 81 to 213 (GEFV…AKSS). In terms of domain architecture, H15 spans 26–97 (EHPSYKEMLT…GPSGTVKLAK (72 aa)). Low complexity-rich tracts occupy residues 102 to 113 (AAAPKKPAAKKA), 123 to 137 (KKAA…PKSA), 157 to 176 (KKAA…APVK), and 203 to 213 (PKKAATPAKSS).

This sequence belongs to the histone H1/H5 family.

Its subcellular location is the nucleus. The protein localises to the chromosome. Functionally, could act as an H1-type linker histone. The polypeptide is Histone H1 (Ascobolus immersus).